A 321-amino-acid chain; its full sequence is Major immediate early protein (321 aa).

Residues 86 to 139 (CSVCLETYSQQSNDTCPFLIPTTCDHGFCFKCVINLQSNAMNIPHSTVCCPLCN) form an RING-type zinc finger. Positions 228 to 249 (LIEENTRLNEQIQELQHQVRTL) are leucine-zipper.

The protein localises to the host nucleus. Plays some regulatory role in both viral DNA replication and transcriptional transactivation. This Lepidoptera (butterflies and moths) protein is Major immediate early protein (PE38).